The primary structure comprises 73 residues: Translation initiation factor IF-1 (73 aa).

Positions 1-73 (MAKKDGVIEI…TRGRIVYRYK (73 aa)) constitute an S1-like domain.

It belongs to the IF-1 family. In terms of assembly, component of the 30S ribosomal translation pre-initiation complex which assembles on the 30S ribosome in the order IF-2 and IF-3, IF-1 and N-formylmethionyl-tRNA(fMet); mRNA recruitment can occur at any time during PIC assembly.

Its subcellular location is the cytoplasm. One of the essential components for the initiation of protein synthesis. Stabilizes the binding of IF-2 and IF-3 on the 30S subunit to which N-formylmethionyl-tRNA(fMet) subsequently binds. Helps modulate mRNA selection, yielding the 30S pre-initiation complex (PIC). Upon addition of the 50S ribosomal subunit IF-1, IF-2 and IF-3 are released leaving the mature 70S translation initiation complex. The protein is Translation initiation factor IF-1 of Paenarthrobacter aurescens (strain TC1).